The chain runs to 92 residues: UPF0223 protein SSA_0938 (92 aa).

The protein belongs to the UPF0223 family.

The protein is UPF0223 protein SSA_0938 of Streptococcus sanguinis (strain SK36).